A 168-amino-acid polypeptide reads, in one-letter code: Ubiquitin-fold modifier-conjugating enzyme 1 (168 aa).

Catalysis depends on C116, which acts as the Glycyl thioester intermediate.

The protein belongs to the ubiquitin-conjugating enzyme family. UFC1 subfamily.

Functionally, E2-like enzyme which forms an intermediate with UFM1 via a thioester linkage. The protein is Ubiquitin-fold modifier-conjugating enzyme 1 of Trichoplax adhaerens (Trichoplax reptans).